Consider the following 407-residue polypeptide: 1-deoxy-D-xylulose 5-phosphate reductoisomerase (407 aa).

Residues threonine 25, glycine 26, serine 27, isoleucine 28, asparagine 53, and asparagine 136 each coordinate NADPH. Lysine 137 provides a ligand contact to 1-deoxy-D-xylulose 5-phosphate. Glutamate 138 contacts NADPH. Residue aspartate 162 participates in Mn(2+) binding. Serine 163, glutamate 164, serine 188, and histidine 211 together coordinate 1-deoxy-D-xylulose 5-phosphate. Glutamate 164 contributes to the Mn(2+) binding site. Glycine 217 contacts NADPH. Serine 224, asparagine 229, lysine 230, and glutamate 233 together coordinate 1-deoxy-D-xylulose 5-phosphate. Glutamate 233 is a binding site for Mn(2+).

The protein belongs to the DXR family. It depends on Mg(2+) as a cofactor. The cofactor is Mn(2+).

It carries out the reaction 2-C-methyl-D-erythritol 4-phosphate + NADP(+) = 1-deoxy-D-xylulose 5-phosphate + NADPH + H(+). It functions in the pathway isoprenoid biosynthesis; isopentenyl diphosphate biosynthesis via DXP pathway; isopentenyl diphosphate from 1-deoxy-D-xylulose 5-phosphate: step 1/6. Its function is as follows. Catalyzes the NADPH-dependent rearrangement and reduction of 1-deoxy-D-xylulose-5-phosphate (DXP) to 2-C-methyl-D-erythritol 4-phosphate (MEP). This is 1-deoxy-D-xylulose 5-phosphate reductoisomerase from Bradyrhizobium diazoefficiens (strain JCM 10833 / BCRC 13528 / IAM 13628 / NBRC 14792 / USDA 110).